A 313-amino-acid chain; its full sequence is Porphobilinogen deaminase (313 aa).

S-(dipyrrolylmethanemethyl)cysteine is present on Cys-242.

This sequence belongs to the HMBS family. Monomer. It depends on dipyrromethane as a cofactor.

The enzyme catalyses 4 porphobilinogen + H2O = hydroxymethylbilane + 4 NH4(+). It functions in the pathway porphyrin-containing compound metabolism; protoporphyrin-IX biosynthesis; coproporphyrinogen-III from 5-aminolevulinate: step 2/4. Tetrapolymerization of the monopyrrole PBG into the hydroxymethylbilane pre-uroporphyrinogen in several discrete steps. This Pseudomonas aeruginosa (strain LESB58) protein is Porphobilinogen deaminase.